The primary structure comprises 102 residues: Salivary thrombin inhibitor anophelin (102 aa).

The first 21 residues, 1-21 (MATKLIVIAFLCAALIAVVQS), serve as a signal peptide directing secretion. Positions 25-102 (YAQGEEPTYD…SDSSSESTEH (78 aa)) are disordered. Over residues 59-69 (SQLTEYANTAQ) the composition is skewed to polar residues. The tract at residues 70–73 (DPGR) is blocks active site cleft of host thrombin in a reverse direction compared to substrates. A compositionally biased stretch (polar residues) spans 80–90 (QANSNNGDQLP). Low complexity predominate over residues 91 to 102 (SQSDSSSESTEH).

Belongs to the anophelin family. In terms of assembly, interacts with human F2 (thrombin); the interaction results in thrombin inhibition.

Its subcellular location is the secreted. Salivary protein with anticoagulant activity that inhibits host thrombin (F2). This chain is Salivary thrombin inhibitor anophelin, found in Anopheles funestus (African malaria mosquito).